A 120-amino-acid chain; its full sequence is Chaperonin GroEL (120 aa).

Residue 23 to 27 (DGTTT) participates in ATP binding.

The protein belongs to the chaperonin (HSP60) family. As to quaternary structure, forms a cylinder of 14 subunits composed of two heptameric rings stacked back-to-back. Interacts with the co-chaperonin GroES.

The protein resides in the cytoplasm. It carries out the reaction ATP + H2O + a folded polypeptide = ADP + phosphate + an unfolded polypeptide.. In terms of biological role, together with its co-chaperonin GroES, plays an essential role in assisting protein folding. The GroEL-GroES system forms a nano-cage that allows encapsulation of the non-native substrate proteins and provides a physical environment optimized to promote and accelerate protein folding. The protein is Chaperonin GroEL of Mycobacterium kansasii.